A 386-amino-acid chain; its full sequence is Putative membrane-bound transacylase BcsY (386 aa).

The next 10 helical transmembrane spans lie at 37–57 (LAIA…FIGV), 91–111 (LLPA…WWVL), 118–138 (IALN…SGHV), 156–176 (LSLE…LPLT), 181–201 (LVLS…WHTG), 237–257 (AVYA…PLSY), 258–278 (ACPS…IMLP), 290–310 (LSPL…GIVV), 322–342 (AMMA…YVLV), and 362–382 (AALL…ISHV).

Belongs to the acyltransferase 3 family.

It is found in the cell inner membrane. The protein operates within glycan metabolism; bacterial cellulose biosynthesis. Its function is as follows. May acylate a glucose moiety into cellulose fibrils, in cooperation with BcsABII and BcsCII. This chain is Putative membrane-bound transacylase BcsY (bcsY), found in Komagataeibacter xylinus (Gluconacetobacter xylinus).